The following is a 377-amino-acid chain: Chaperone protein DnaJ (377 aa).

In terms of domain architecture, J spans 5-70; it reads DYYEILGVSK…QKRAAYDQYG (66 aa). Residues 132–210 form a CR-type zinc finger; sequence GVTKEIRIPT…CHGHGRVEKT (79 aa). The Zn(2+) site is built by Cys-145, Cys-148, Cys-162, Cys-165, Cys-184, Cys-187, Cys-198, and Cys-201. 4 CXXCXGXG motif repeats span residues 145–152, 162–169, 184–191, and 198–205; these read CDVCHGSG, CPTCHGAG, CPHCQGRG, and CNKCHGHG.

It belongs to the DnaJ family. In terms of assembly, homodimer. Zn(2+) is required as a cofactor.

The protein resides in the cytoplasm. Functionally, participates actively in the response to hyperosmotic and heat shock by preventing the aggregation of stress-denatured proteins and by disaggregating proteins, also in an autonomous, DnaK-independent fashion. Unfolded proteins bind initially to DnaJ; upon interaction with the DnaJ-bound protein, DnaK hydrolyzes its bound ATP, resulting in the formation of a stable complex. GrpE releases ADP from DnaK; ATP binding to DnaK triggers the release of the substrate protein, thus completing the reaction cycle. Several rounds of ATP-dependent interactions between DnaJ, DnaK and GrpE are required for fully efficient folding. Also involved, together with DnaK and GrpE, in the DNA replication of plasmids through activation of initiation proteins. The polypeptide is Chaperone protein DnaJ (Klebsiella pneumoniae subsp. pneumoniae (strain ATCC 700721 / MGH 78578)).